A 273-amino-acid polypeptide reads, in one-letter code: Probable ribosomal RNA small subunit methyltransferase A (273 aa).

6 residues coordinate S-adenosyl-L-methionine: asparagine 26, leucine 28, glycine 53, glutamate 74, aspartate 98, and asparagine 113.

This sequence belongs to the class I-like SAM-binding methyltransferase superfamily. rRNA adenine N(6)-methyltransferase family. RsmA subfamily.

Its subcellular location is the cytoplasm. Its function is as follows. Specifically dimethylates two adjacent adenosines in the loop of a conserved hairpin near the 3'-end of 16S rRNA in the 30S particle. May play a critical role in biogenesis of 30S subunits. The protein is Probable ribosomal RNA small subunit methyltransferase A of Methanothermobacter thermautotrophicus (strain ATCC 29096 / DSM 1053 / JCM 10044 / NBRC 100330 / Delta H) (Methanobacterium thermoautotrophicum).